Consider the following 112-residue polypeptide: Large ribosomal subunit protein bL17 (112 aa).

The protein belongs to the bacterial ribosomal protein bL17 family. In terms of assembly, part of the 50S ribosomal subunit. Contacts protein L32.

The protein is Large ribosomal subunit protein bL17 of Moorella thermoacetica (strain ATCC 39073 / JCM 9320).